An 860-amino-acid polypeptide reads, in one-letter code: Protein argonaute-2 (860 aa).

Positions 1-30 are disordered; sequence MYSGAGPALAPPAPPPPPIQGYAFKPPPRP. Position 2 is a 3'-nitrotyrosine (Tyr2). Pro residues predominate over residues 9 to 30; the sequence is LAPPAPPPPPIQGYAFKPPPRP. The 120-residue stretch at 230–349 folds into the PAZ domain; sequence PVIEFVCEVL…LPLEVCNIVA (120 aa). Positions 312-317 are interaction with guide RNA; sequence YFKDRH. Ser388 carries the phosphoserine modification. The region spanning 518 to 819 is the Piwi domain; it reads LVVVILPGKT…VAFRARYHLV (302 aa). The segment at 525 to 567 is interaction with guide RNA; the sequence is GKTPVYAEVKRVGDTVLGMATQCVQMKNVQRTTPQTLSNLWLK. An interaction with GW182 family members region spans residues 588–591; that stretch reads FQQP. Residue Asp598 participates in a divalent metal cation binding. An interaction with GW182 family members region spans residues 651–661; it reads LIQFYKSTRFK. Residue Asp670 coordinates a divalent metal cation. Pro701 is subject to 4-hydroxyproline. 3 interaction with guide RNA regions span residues 710 to 711, 754 to 762, and 791 to 813; these read KR, HAGIQGTSR, and YVRC…VAFR. Position 808 (His808) interacts with a divalent metal cation. Phosphoserine occurs at positions 825, 829, 832, and 835.

It belongs to the argonaute family. Ago subfamily. In terms of assembly, interacts with DICER1 through its Piwi domain and with TARBP2 during assembly of the RNA-induced silencing complex (RISC). Together, DICER1, AGO2 and TARBP2 constitute the trimeric RISC loading complex (RLC), or micro-RNA (miRNA) loading complex (miRLC). Within the RLC/miRLC, DICER1 and TARBP2 are required to process precursor miRNAs (pre-miRNAs) to mature miRNAs and then load them onto AGO2. AGO2 bound to the mature miRNA constitutes the minimal RISC and may subsequently dissociate from DICER1 and TARBP2. Note however that the term RISC has also been used to describe the trimeric RLC/miRLC. The formation of RISC complexes containing siRNAs rather than miRNAs appears to occur independently of DICER1. Interacts with AGO1. Also interacts with DDB1, DDX5, DDX6, DDX20, DHX30, DHX36, DDX47, DHX9, ELAVL, FXR1, GEMIN4, HNRNPF, IGF2BP1, ILF3, IMP8, MATR3, PABPC1, PRMT5, P4HA1, P4HB, RBM4, SART3, TNRC6A, TNRC6B, UPF1 and YBX1. Interacts with the P-body components DCP1A and XRN1. Associates with polysomes and messenger ribonucleoproteins (mNRPs). Interacts with RBM4; the interaction is modulated under stress-induced conditions, occurs under both cell proliferation and differentiation conditions and in an RNA- and phosphorylation-independent manner. Interacts with LIMD1, WTIP and AJUBA. Interacts with TRIM71; the interaction increases in presence of RNA. Interacts with APOBEC3G in an RNA-dependent manner. Interacts with APOBEC3A, APOBEC3C, APOBEC3F and APOBEC3H. Interacts with DICER1, TARBP2, EIF6, MOV10 and RPL7A (60S ribosome subunit); they form a large RNA-induced silencing complex (RISC). Interacts with FMR1. Interacts with ZFP36. Interacts with RC3H1; the interaction is RNA independent. Found in a complex composed of AGO2, CHD7 and ARB2A. Interacts with SND1 and SYT11. Interacts with CLNK. Interacts with GARRE1. Interacts with GRB2; this interaction is important for the formation of a ternary complex containing GRB2, AGO2 and DICER1. It depends on Mg(2+) as a cofactor. Mn(2+) is required as a cofactor. In terms of processing, hydroxylated. 4-hydroxylation appears to enhance protein stability but is not required for miRNA-binding or endonuclease activity. Ubiquitinated on surface-exposed lysines by a SCF-like E3 ubiquitin-protein ligase complex containing ZSWIM8 during target-directed microRNA degradation (TDMD), a process that mediates degradation of microRNAs (miRNAs). Ubiquitination by the SCF-like E3 ubiquitin-protein ligase complex containing ZSWIM8 leads to its subsequent degradation, thereby exposing miRNAs for degradation. ZSWIM8 recognizes and binds AGO2 when it is engaged with a TDMD target. Post-translationally, phosphorylation at Ser-388 by AKT3; leads to up-regulate translational repression of microRNA target and down-regulate endonucleolytic cleavage. In terms of processing, a phosphorylation cycle of C-terminal serine cluster (Ser-825-Ser-835) regulates the release of target mRNAs. Target-binding leads to phosphorylation of these residues by CSNK1A1, which reduces the affinity of AGO2 for mRNA and enables target release. The ANKRD52-PPP6C phosphatase complex dephosphorylates the residues, which primes AGO2 for binding a new target.

The protein resides in the cytoplasm. The protein localises to the P-body. Its subcellular location is the nucleus. It carries out the reaction Endonucleolytic cleavage to 5'-phosphomonoester.. Its function is as follows. Required for RNA-mediated gene silencing (RNAi) by the RNA-induced silencing complex (RISC). The 'minimal RISC' appears to include AGO2 bound to a short guide RNA such as a microRNA (miRNA) or short interfering RNA (siRNA). These guide RNAs direct RISC to complementary mRNAs that are targets for RISC-mediated gene silencing. The precise mechanism of gene silencing depends on the degree of complementarity between the miRNA or siRNA and its target. Binding of RISC to a perfectly complementary mRNA generally results in silencing due to endonucleolytic cleavage of the mRNA specifically by AGO2. Binding of RISC to a partially complementary mRNA results in silencing through inhibition of translation, and this is independent of endonuclease activity. May inhibit translation initiation by binding to the 7-methylguanosine cap, thereby preventing the recruitment of the translation initiation factor eIF4-E. May also inhibit translation initiation via interaction with EIF6, which itself binds to the 60S ribosomal subunit and prevents its association with the 40S ribosomal subunit. The inhibition of translational initiation leads to the accumulation of the affected mRNA in cytoplasmic processing bodies (P-bodies), where mRNA degradation may subsequently occur. In some cases RISC-mediated translational repression is also observed for miRNAs that perfectly match the 3' untranslated region (3'-UTR). Can also up-regulate the translation of specific mRNAs under certain growth conditions. Binds to the AU element of the 3'-UTR of the TNF (TNF-alpha) mRNA and up-regulates translation under conditions of serum starvation. Also required for transcriptional gene silencing (TGS), in which short RNAs known as antigene RNAs or agRNAs direct the transcriptional repression of complementary promoter regions. The chain is Protein argonaute-2 (AGO2) from Bos taurus (Bovine).